The chain runs to 329 residues: uncharacterized protein (329 aa).

Coiled coils occupy residues 57–119 and 224–250; these read KKEE…LQEV and AQRQ…LGNV.

This is an uncharacterized protein from Macaca fascicularis (Crab-eating macaque).